A 180-amino-acid chain; its full sequence is Large ribosomal subunit protein uL6c (180 aa).

The protein belongs to the universal ribosomal protein uL6 family. Part of the 50S ribosomal subunit.

It is found in the plastid. It localises to the chloroplast. Its function is as follows. Binds 23S rRNA. The sequence is that of Large ribosomal subunit protein uL6c (rpl6) from Porphyra purpurea (Red seaweed).